The sequence spans 117 residues: MDWTWRFLFVVAAATGVQSQVQLVQSGAEVKKPGSSVKVSCKASGGTFSSYAISWVRQAPGQGLEWMGGIIPIFGTANYAQKFQGRVTITADKSTSTAYMELSSLRSEDTAVYYCAR.

The N-terminal stretch at 1–19 (MDWTWRFLFVVAAATGVQS) is a signal peptide. Pyrrolidone carboxylic acid is present on Gln20. Residues 20–44 (QVQLVQSGAEVKKPGSSVKVSCKAS) form a framework-1 region. Residues 20–117 (QVQLVQSGAE…EDTAVYYCAR (98 aa)) enclose the Ig-like domain. Cys41 and Cys115 are disulfide-bonded. A complementarity-determining-1 region spans residues 45–52 (GGTFSSYA). Residues 53–69 (ISWVRQAPGQGLEWMGG) form a framework-2 region. The tract at residues 70-77 (IIPIFGTA) is complementarity-determining-2. Residues 78–115 (NYAQKFQGRVTITADKSTSTAYMELSSLRSEDTAVYYC) form a framework-3 region. The complementarity-determining-3 stretch occupies residues 116–117 (AR).

In terms of assembly, immunoglobulins are composed of two identical heavy chains and two identical light chains; disulfide-linked.

It is found in the secreted. It localises to the cell membrane. Its function is as follows. V region of the variable domain of immunoglobulin heavy chains that participates in the antigen recognition. Immunoglobulins, also known as antibodies, are membrane-bound or secreted glycoproteins produced by B lymphocytes. In the recognition phase of humoral immunity, the membrane-bound immunoglobulins serve as receptors which, upon binding of a specific antigen, trigger the clonal expansion and differentiation of B lymphocytes into immunoglobulins-secreting plasma cells. Secreted immunoglobulins mediate the effector phase of humoral immunity, which results in the elimination of bound antigens. The antigen binding site is formed by the variable domain of one heavy chain, together with that of its associated light chain. Thus, each immunoglobulin has two antigen binding sites with remarkable affinity for a particular antigen. The variable domains are assembled by a process called V-(D)-J rearrangement and can then be subjected to somatic hypermutations which, after exposure to antigen and selection, allow affinity maturation for a particular antigen. The polypeptide is Immunoglobulin heavy variable 1-69 (Homo sapiens (Human)).